Here is a 225-residue protein sequence, read N- to C-terminus: Recoverin family protein DDB_G0274781 (225 aa).

Low complexity predominate over residues 1-13 (MGNKQGKSPNNSK). The segment at 1–20 (MGNKQGKSPNNSKGGKKYKI) is disordered. A lipid anchor (N-myristoyl glycine) is attached at Gly-2. 3 consecutive EF-hand domains span residues 78 to 113 (DNSPFGDRLFDLLDTNKDNTVDLQEFISGLSILCKG), 114 to 149 (TAEEKLELSFKAYDIDGNGYITKSELSQMFQQAWIS), and 174 to 209 (MAQIFADGAFSSLDVNGDGKLSFNEFKQFAMSHPKI). The Ca(2+) site is built by Asp-91, Asn-93, Asp-95, Thr-97, Glu-102, Asp-127, Asp-129, Asn-131, Tyr-133, Glu-138, Asp-187, Asn-189, Asp-191, Lys-193, and Glu-198.

This sequence belongs to the recoverin family.

This chain is Recoverin family protein DDB_G0274781, found in Dictyostelium discoideum (Social amoeba).